The sequence spans 330 residues: D-lactate dehydrogenase (330 aa).

Residues 156-157, Asp176, 206-207, 233-235, and Asp259 each bind NAD(+); these read RI, VP, and AAR. Arg235 is an active-site residue. The active site involves Glu264. The Proton donor role is filled by His296.

It belongs to the D-isomer specific 2-hydroxyacid dehydrogenase family.

The catalysed reaction is (R)-lactate + NAD(+) = pyruvate + NADH + H(+). This is D-lactate dehydrogenase (ldhD) from Staphylococcus aureus (strain MSSA476).